The chain runs to 416 residues: Tumor necrosis factor receptor superfamily member 19 (416 aa).

The signal sequence occupies residues 1–29; it reads MALKVLPLHRTVLFAAILFLLHLACKVSC. The Extracellular portion of the chain corresponds to 30 to 170; sequence ETGDCRQQEF…TVSSPRDTAL (141 aa). TNFR-Cys repeat units follow at residues 33-72 and 74-114; these read DCRQ…DAQC and PCRP…DAVC. 8 disulfide bridges follow: Cys34/Cys46, Cys49/Cys62, Cys52/Cys72, Cys75/Cys89, Cys92/Cys106, Cys95/Cys114, Cys117/Cys135, and Cys138/Cys149. Residue Asn105 is glycosylated (N-linked (GlcNAc...) asparagine). Residues 116-149 form a TNFR-Cys 3; truncated repeat; sequence DCLPGFYRKTKLVGFQDMECVPCGDPPPPYEPHC. The helical transmembrane segment at 171–191 threads the bilayer; it reads AAVICSALATVLLALLILCVI. Topologically, residues 192-416 are cytoplasmic; it reads YCKRQFMEKK…LAMPTAFQDA (225 aa). The interval 321-416 is disordered; it reads LCDSYPELTG…LAMPTAFQDA (96 aa). Composition is skewed to polar residues over residues 331–351, 360–370, and 381–396; these read EDTN…SSGG, LESSGNVSEST, and VWEQ…TPSQ.

As to quaternary structure, associates with TRAF1, TRAF2, TRAF3 and TRAF5. Interacts with LINGO1. In terms of tissue distribution, highly expressed in adult brain, and in embryos from day 11-17, but not earlier. Detected in embryonic brain and epithelium, and at lower levels in adult heart, lung and liver. In neonatal mice, mainly in hair follicles and neuron-like cells in the cerebellum, but not in the skin epidermis. Isoform 3 was found in embryonic day 17.5 skin but not in brain and liver.

Its subcellular location is the cell membrane. The protein localises to the secreted. In terms of biological role, can mediate activation of c-Jun and NF-kappa-B. May promote caspase-independent cell death. Isoform 2 and isoform 3 may act as decoy receptors. This Mus musculus (Mouse) protein is Tumor necrosis factor receptor superfamily member 19 (Tnfrsf19).